Here is a 140-residue protein sequence, read N- to C-terminus: Large-conductance mechanosensitive channel (140 aa).

The next 2 helical transmembrane spans lie at 16 to 36 (VVDL…VDSI) and 86 to 106 (GSFL…FLMV).

Belongs to the MscL family. Homopentamer.

The protein localises to the cell inner membrane. Channel that opens in response to stretch forces in the membrane lipid bilayer. May participate in the regulation of osmotic pressure changes within the cell. This is Large-conductance mechanosensitive channel from Anaeromyxobacter sp. (strain K).